The chain runs to 471 residues: Putative ABC transporter ATP-binding protein STK_11360 (471 aa).

2 ABC transporter domains span residues 4–241 and 255–470; these read LEIK…LEPL and VILE…VIKD. ATP contacts are provided by residues 37 to 44 and 286 to 293; these read GKSGSGKS and GDNGSGKS.

Belongs to the ABC transporter superfamily.

It is found in the cell membrane. Functionally, probably part of an ABC transporter complex. Responsible for energy coupling to the transport system. The protein is Putative ABC transporter ATP-binding protein STK_11360 of Sulfurisphaera tokodaii (strain DSM 16993 / JCM 10545 / NBRC 100140 / 7) (Sulfolobus tokodaii).